The following is a 344-amino-acid chain: 4-hydroxy-2-oxovalerate aldolase (344 aa).

Positions 8–260 (VTLHDMSLRD…NHGIDLYKIM (253 aa)) constitute a Pyruvate carboxyltransferase domain. Substrate is bound at residue 16-17 (RD). Asp-17 contributes to the Mn(2+) binding site. Catalysis depends on His-20, which acts as the Proton acceptor. Substrate-binding residues include Ser-170 and His-199. Positions 199 and 201 each coordinate Mn(2+). Residue Tyr-290 coordinates substrate.

It belongs to the 4-hydroxy-2-oxovalerate aldolase family.

It carries out the reaction (S)-4-hydroxy-2-oxopentanoate = acetaldehyde + pyruvate. The sequence is that of 4-hydroxy-2-oxovalerate aldolase (mhpE) from Pseudoalteromonas translucida (strain TAC 125).